The primary structure comprises 579 residues: Insulin-like growth factor 2 mRNA-binding protein 3 (579 aa).

2 consecutive RRM domains span residues 2–75 (NKLY…HSVP) and 81–156 (RKLQ…YIPD). A disordered region spans residues 158–192 (TAAQQNPSPQLRGRRGPGQRGSSRQASPGSVSKQK). S165 is subject to Phosphoserine. S184 bears the Phosphoserine; by MTOR mark. KH domains are found at residues 195–260 (DLPL…CKSI), 276–343 (EIPL…EEEI), and 405–470 (TETV…QGRI). Residues K450 and K475 each participate in a glycyl lysine isopeptide (Lys-Gly) (interchain with G-Cter in SUMO2) cross-link. The KH 4 domain occupies 487-553 (KLEAHIRVPS…YACQVAQRKI (67 aa)). T528 carries the phosphothreonine modification.

Belongs to the RRM IMP/VICKZ family. In terms of assembly, can form homooligomers and heterooligomers with IGF2BP1 and IGF2BP3 in an RNA-dependent manner. Interacts with IGF2BP1. Interacts with ELAVL1, DHX9, HNRNPU, MATR3 and PABPC1. Expressed in oocytes, spermatogonia and spermatocytes (at protein level).

It localises to the nucleus. The protein resides in the cytoplasm. It is found in the P-body. The protein localises to the stress granule. RNA-binding factor that may recruit target transcripts to cytoplasmic protein-RNA complexes (mRNPs). This transcript 'caging' into mRNPs allows mRNA transport and transient storage. It also modulates the rate and location at which target transcripts encounter the translational apparatus and shields them from endonuclease attacks or microRNA-mediated degradation. Preferentially binds to N6-methyladenosine (m6A)-containing mRNAs and increases their stability. Binds to the 3'-UTR of CD44 mRNA and stabilizes it, hence promotes cell adhesion and invadopodia formation. Binds to beta-actin/ACTB and MYC transcripts. Increases MYC mRNA stability by binding to the coding region instability determinant (CRD) and binding is enhanced by m6A-modification of the CRD. Binds to the 5'-UTR of the insulin-like growth factor 2 (IGF2) mRNAs. The sequence is that of Insulin-like growth factor 2 mRNA-binding protein 3 (Igf2bp3) from Mus musculus (Mouse).